Consider the following 354-residue polypeptide: Chorismate synthase (354 aa).

Arginine 48 provides a ligand contact to NADP(+). Residues 126 to 128 (RAS), alanine 278, 293 to 297 (KPIPS), and arginine 319 contribute to the FMN site.

It belongs to the chorismate synthase family. In terms of assembly, homotetramer. It depends on FMNH2 as a cofactor.

The enzyme catalyses 5-O-(1-carboxyvinyl)-3-phosphoshikimate = chorismate + phosphate. It participates in metabolic intermediate biosynthesis; chorismate biosynthesis; chorismate from D-erythrose 4-phosphate and phosphoenolpyruvate: step 7/7. Functionally, catalyzes the anti-1,4-elimination of the C-3 phosphate and the C-6 proR hydrogen from 5-enolpyruvylshikimate-3-phosphate (EPSP) to yield chorismate, which is the branch point compound that serves as the starting substrate for the three terminal pathways of aromatic amino acid biosynthesis. This reaction introduces a second double bond into the aromatic ring system. The polypeptide is Chorismate synthase (Desulfosudis oleivorans (strain DSM 6200 / JCM 39069 / Hxd3) (Desulfococcus oleovorans)).